A 341-amino-acid polypeptide reads, in one-letter code: Ferrochelatase (341 aa).

Fe cation is bound by residues His-189 and Glu-293.

The protein belongs to the ferrochelatase family.

It is found in the cytoplasm. It catalyses the reaction heme b + 2 H(+) = protoporphyrin IX + Fe(2+). Its pathway is porphyrin-containing compound metabolism; protoheme biosynthesis; protoheme from protoporphyrin-IX: step 1/1. Its function is as follows. Catalyzes the ferrous insertion into protoporphyrin IX. This is Ferrochelatase from Pseudomonas fluorescens (strain SBW25).